A 246-amino-acid chain; its full sequence is Pyridoxine 5'-phosphate synthase (246 aa).

Asparagine 12 is a 3-amino-2-oxopropyl phosphate binding site. 14–15 (DH) lines the 1-deoxy-D-xylulose 5-phosphate pocket. Arginine 23 contacts 3-amino-2-oxopropyl phosphate. Histidine 48 (proton acceptor) is an active-site residue. 1-deoxy-D-xylulose 5-phosphate-binding residues include arginine 50 and histidine 55. Residue glutamate 75 is the Proton acceptor of the active site. Threonine 105 contributes to the 1-deoxy-D-xylulose 5-phosphate binding site. The active-site Proton donor is the histidine 196. Residues glycine 197 and 218-219 (GH) each bind 3-amino-2-oxopropyl phosphate.

It belongs to the PNP synthase family. Homooctamer; tetramer of dimers.

The protein localises to the cytoplasm. It carries out the reaction 3-amino-2-oxopropyl phosphate + 1-deoxy-D-xylulose 5-phosphate = pyridoxine 5'-phosphate + phosphate + 2 H2O + H(+). It participates in cofactor biosynthesis; pyridoxine 5'-phosphate biosynthesis; pyridoxine 5'-phosphate from D-erythrose 4-phosphate: step 5/5. Functionally, catalyzes the complicated ring closure reaction between the two acyclic compounds 1-deoxy-D-xylulose-5-phosphate (DXP) and 3-amino-2-oxopropyl phosphate (1-amino-acetone-3-phosphate or AAP) to form pyridoxine 5'-phosphate (PNP) and inorganic phosphate. The sequence is that of Pyridoxine 5'-phosphate synthase from Pseudomonas putida (strain ATCC 47054 / DSM 6125 / CFBP 8728 / NCIMB 11950 / KT2440).